A 324-amino-acid chain; its full sequence is tRNA U34 carboxymethyltransferase (324 aa).

Residues Lys-91, Trp-105, Lys-110, Gly-130, 152 to 154, 181 to 182, Met-196, Tyr-200, and Arg-315 contribute to the carboxy-S-adenosyl-L-methionine site; these read DPS and IE.

This sequence belongs to the class I-like SAM-binding methyltransferase superfamily. CmoB family. Homotetramer.

The enzyme catalyses carboxy-S-adenosyl-L-methionine + 5-hydroxyuridine(34) in tRNA = 5-carboxymethoxyuridine(34) in tRNA + S-adenosyl-L-homocysteine + H(+). Functionally, catalyzes carboxymethyl transfer from carboxy-S-adenosyl-L-methionine (Cx-SAM) to 5-hydroxyuridine (ho5U) to form 5-carboxymethoxyuridine (cmo5U) at position 34 in tRNAs. The protein is tRNA U34 carboxymethyltransferase of Photobacterium profundum (strain SS9).